Reading from the N-terminus, the 141-residue chain is Hemoglobin subunit alpha-A (141 aa).

A Globin domain is found at 1–141 (VLSASDKANV…VGTVLTAKYR (141 aa)). His58 provides a ligand contact to O2. Residue His87 coordinates heme b.

This sequence belongs to the globin family. Heterotetramer of two alpha chains and two beta chains. Red blood cells.

Its function is as follows. Involved in oxygen transport from the lung to the various peripheral tissues. In Sturnus vulgaris (Starling), this protein is Hemoglobin subunit alpha-A (HBAA).